Here is a 104-residue protein sequence, read N- to C-terminus: MAAIQGIEGVISQLQATAMAASGQETHSQSTVSFAGQLHAALDRISDRQTAARVQAEKFTLGEPGIALNDVMADMQKASVSMQMGIQVRNKLVAAYQEVMSMQV.

This sequence belongs to the FliE family.

The protein localises to the bacterial flagellum basal body. This Salmonella newport (strain SL254) protein is Flagellar hook-basal body complex protein FliE.